Consider the following 703-residue polypeptide: Protein STRUBBELIG-RECEPTOR FAMILY 8 (703 aa).

An N-terminal signal peptide occupies residues 1 to 27 (MAIGDRAMFTVLLLFIASISGFSVVRC). Residues 28 to 291 (VTDPSDVQAL…GKGLSGGVVT (264 aa)) are Extracellular-facing. 7 LRR repeats span residues 96 to 120 (LKSLRKLDVSGNSIHDTLPYQLPPN), 122 to 142 (TSLNLARNNLSGNLPYSISAM), 143 to 165 (GSLSYMNVSGNSLTMSIGDIFAD), 166 to 190 (HKSLATLDLSHNNFSGDLPSSLSTV), 192 to 212 (TLSVLYVQNNQLTGSIDVLSG), 213 to 233 (LPLKTLNVANNHFNGSIPKEL), and 234 to 256 (SSIQTLIYDGNSFDNVPASPQPE). N-linked (GlcNAc...) asparagine glycosylation is found at Asn120, Asn130, Asn149, and Asn178. Asn226 carries an N-linked (GlcNAc...) asparagine glycan. The tract at residues 247-284 (DNVPASPQPERPGKKETPSGSKKPKIGSEEKSSDSGKG) is disordered. The chain crosses the membrane as a helical span at residues 292–312 (GIVFGSLFVAGIIALVLYLCL). At 313–703 (HKKKRKVRGS…PEHEHVDISF (391 aa)) the chain is on the cytoplasmic side. The Protein kinase domain maps to 395 to 672 (FSQENIIGEG…SEVVQQLVRL (278 aa)). ATP contacts are provided by residues 401 to 409 (IGEGSLGRV) and Lys423.

It belongs to the protein kinase superfamily. Ser/Thr protein kinase family. Expressed in seedlings, roots, stems, leaves, flowers and siliques.

It localises to the membrane. The protein is Protein STRUBBELIG-RECEPTOR FAMILY 8 (SRF8) of Arabidopsis thaliana (Mouse-ear cress).